Reading from the N-terminus, the 273-residue chain is Flagellin FljO (273 aa).

Belongs to the bacterial flagellin family. In C.crescentus, the flagellar filament is composed of multiple flagellins of 29 kDa; 27 kDa and 25 kDa.

It localises to the secreted. The protein localises to the bacterial flagellum. Its function is as follows. Flagellin is the subunit protein which polymerizes to form the filaments of bacterial flagella. The polypeptide is Flagellin FljO (fljO) (Caulobacter vibrioides (strain ATCC 19089 / CIP 103742 / CB 15) (Caulobacter crescentus)).